Consider the following 1500-residue polypeptide: DNA-directed RNA polymerase subunit beta' (1500 aa).

Zn(2+) contacts are provided by cysteine 60, cysteine 62, cysteine 75, and cysteine 78. Residues 180 to 199 form a disordered region; the sequence is DLGGMETAQRSTQRQIEEDY. The Mg(2+) site is built by aspartate 626, aspartate 628, and aspartate 630. Zn(2+) is bound by residues cysteine 1002, cysteine 1075, cysteine 1082, and cysteine 1085. The interval 1440–1500 is disordered; the sequence is EVQQAEKSAE…DSDHPDLSSL (61 aa). Positions 1449–1468 are enriched in polar residues; sequence EPTTTALPTTNGHQAPQSDT.

The protein belongs to the RNA polymerase beta' chain family. In terms of assembly, the RNAP catalytic core consists of 2 alpha, 1 beta, 1 beta' and 1 omega subunit. When a sigma factor is associated with the core the holoenzyme is formed, which can initiate transcription. Mg(2+) serves as cofactor. The cofactor is Zn(2+).

It carries out the reaction RNA(n) + a ribonucleoside 5'-triphosphate = RNA(n+1) + diphosphate. DNA-dependent RNA polymerase catalyzes the transcription of DNA into RNA using the four ribonucleoside triphosphates as substrates. In Chloroflexus aggregans (strain MD-66 / DSM 9485), this protein is DNA-directed RNA polymerase subunit beta'.